A 186-amino-acid polypeptide reads, in one-letter code: Cell division protein ZapC (186 aa).

Belongs to the ZapC family. As to quaternary structure, interacts directly with FtsZ.

Its subcellular location is the cytoplasm. Functionally, contributes to the efficiency of the cell division process by stabilizing the polymeric form of the cell division protein FtsZ. Acts by promoting interactions between FtsZ protofilaments and suppressing the GTPase activity of FtsZ. This is Cell division protein ZapC from Musicola paradisiaca (strain Ech703) (Dickeya paradisiaca).